The following is a 321-amino-acid chain: Torsin-2A (321 aa).

An N-terminal signal peptide occupies residues 1-26 (MAAATRSCRPWGSLLGLIWLVSAAAA). 93–100 (GWTGTGKS) contacts ATP. Asn149 carries an N-linked (GlcNAc...) asparagine glycan.

Belongs to the ClpA/ClpB family. Torsin subfamily. As to quaternary structure, homohexamer. Interacts with TOR1AIP1.

The protein resides in the endoplasmic reticulum lumen. This chain is Torsin-2A (TOR2A), found in Bos taurus (Bovine).